Here is a 1571-residue protein sequence, read N- to C-terminus: Pentafunctional AROM polypeptide (1571 aa).

Residues 1-384 (MEQPTTIQIL…HEQKASVVSN (384 aa)) form a 3-dehydroquinate synthase region. NAD(+) is bound by residues 44-46 (DTN), 81-84 (ESSK), 114-116 (GGV), and D119. Position 130 (R130) interacts with 7-phospho-2-dehydro-3-deoxy-D-arabino-heptonate. 139–140 (TT) contributes to the NAD(+) binding site. The 7-phospho-2-dehydro-3-deoxy-D-arabino-heptonate site is built by D146 and K152. K161 serves as a coordination point for NAD(+). N162 contacts 7-phospho-2-dehydro-3-deoxy-D-arabino-heptonate. NAD(+)-binding positions include 179–182 (FLNT) and N190. Zn(2+) is bound at residue E194. 7-phospho-2-dehydro-3-deoxy-D-arabino-heptonate-binding positions include 194–197 (EVIK) and K250. E260 serves as the catalytic Proton acceptor; for 3-dehydroquinate synthase activity. 7-phospho-2-dehydro-3-deoxy-D-arabino-heptonate contacts are provided by residues 264–268 (RNLLN) and H271. Residue H271 participates in Zn(2+) binding. H275 functions as the Proton acceptor; for 3-dehydroquinate synthase activity in the catalytic mechanism. Residues H287 and K356 each contribute to the 7-phospho-2-dehydro-3-deoxy-D-arabino-heptonate site. H287 contributes to the Zn(2+) binding site. An EPSP synthase region spans residues 397–843 (VLPGIPKPLN…WDALAQTFKV (447 aa)). C825 acts as the For EPSP synthase activity in catalysis. Residues 866 to 1057 (ASIFIIGMRG…KKKDHSFFVS (192 aa)) are shikimate kinase. 872 to 879 (GMRGAGKT) contacts ATP. The segment at 1058-1278 (LTLPDLQLSA…AAPGQVSAKD (221 aa)) is 3-dehydroquinase. Residue H1181 is the Proton acceptor; for 3-dehydroquinate dehydratase activity of the active site. K1209 functions as the Schiff-base intermediate with substrate; for 3-dehydroquinate dehydratase activity in the catalytic mechanism. The interval 1291–1571 (AKKFALFGKP…EDARAAVMNI (281 aa)) is shikimate dehydrogenase.

In the N-terminal section; belongs to the sugar phosphate cyclases superfamily. Dehydroquinate synthase family. The protein in the 2nd section; belongs to the EPSP synthase family. It in the 3rd section; belongs to the shikimate kinase family. This sequence in the 4th section; belongs to the type-I 3-dehydroquinase family. In the C-terminal section; belongs to the shikimate dehydrogenase family. As to quaternary structure, homodimer. Zn(2+) is required as a cofactor.

The protein localises to the cytoplasm. The catalysed reaction is 7-phospho-2-dehydro-3-deoxy-D-arabino-heptonate = 3-dehydroquinate + phosphate. It catalyses the reaction 3-dehydroquinate = 3-dehydroshikimate + H2O. It carries out the reaction shikimate + NADP(+) = 3-dehydroshikimate + NADPH + H(+). The enzyme catalyses shikimate + ATP = 3-phosphoshikimate + ADP + H(+). The catalysed reaction is 3-phosphoshikimate + phosphoenolpyruvate = 5-O-(1-carboxyvinyl)-3-phosphoshikimate + phosphate. Its pathway is metabolic intermediate biosynthesis; chorismate biosynthesis; chorismate from D-erythrose 4-phosphate and phosphoenolpyruvate: step 2/7. It functions in the pathway metabolic intermediate biosynthesis; chorismate biosynthesis; chorismate from D-erythrose 4-phosphate and phosphoenolpyruvate: step 3/7. It participates in metabolic intermediate biosynthesis; chorismate biosynthesis; chorismate from D-erythrose 4-phosphate and phosphoenolpyruvate: step 4/7. The protein operates within metabolic intermediate biosynthesis; chorismate biosynthesis; chorismate from D-erythrose 4-phosphate and phosphoenolpyruvate: step 5/7. Its pathway is metabolic intermediate biosynthesis; chorismate biosynthesis; chorismate from D-erythrose 4-phosphate and phosphoenolpyruvate: step 6/7. The AROM polypeptide catalyzes 5 consecutive enzymatic reactions in prechorismate polyaromatic amino acid biosynthesis. The protein is Pentafunctional AROM polypeptide of Arthroderma otae (strain ATCC MYA-4605 / CBS 113480) (Microsporum canis).